The chain runs to 278 residues: Tryptophan synthase alpha chain (278 aa).

Residues glutamate 50 and aspartate 61 each act as proton acceptor in the active site.

Belongs to the TrpA family. Tetramer of two alpha and two beta chains.

The catalysed reaction is (1S,2R)-1-C-(indol-3-yl)glycerol 3-phosphate + L-serine = D-glyceraldehyde 3-phosphate + L-tryptophan + H2O. Its pathway is amino-acid biosynthesis; L-tryptophan biosynthesis; L-tryptophan from chorismate: step 5/5. Functionally, the alpha subunit is responsible for the aldol cleavage of indoleglycerol phosphate to indole and glyceraldehyde 3-phosphate. This is Tryptophan synthase alpha chain from Methylobacterium nodulans (strain LMG 21967 / CNCM I-2342 / ORS 2060).